The sequence spans 71 residues: MDIVKSIDTSVDAVLDEFDCAHFAVTLKVEFKTGKLLVCIGFGDTILEAKDKAYAKLGCSIIEEVNSHTVV.

This Canis lupus familiaris (Dog) protein is Non-structural protein 3a.